Here is a 126-residue protein sequence, read N- to C-terminus: Small ribosomal subunit protein uS13 (126 aa).

Residues Arg-94–Lys-126 are disordered.

This sequence belongs to the universal ribosomal protein uS13 family. Part of the 30S ribosomal subunit. Forms a loose heterodimer with protein S19. Forms two bridges to the 50S subunit in the 70S ribosome.

In terms of biological role, located at the top of the head of the 30S subunit, it contacts several helices of the 16S rRNA. In the 70S ribosome it contacts the 23S rRNA (bridge B1a) and protein L5 of the 50S subunit (bridge B1b), connecting the 2 subunits; these bridges are implicated in subunit movement. Contacts the tRNAs in the A and P-sites. In Parafrankia sp. (strain EAN1pec), this protein is Small ribosomal subunit protein uS13.